The primary structure comprises 152 residues: CASP-like protein 5B3 (152 aa).

Over methionine 1–cysteine 21 the chain is Cytoplasmic. Transmembrane regions (helical) follow at residues valine 22–alanine 42 and phenylalanine 43–leucine 63. Residues aspartate 64–proline 77 lie on the Extracellular side of the membrane. A helical transmembrane segment spans residues valine 78–alanine 98. Residues serine 99–serine 127 lie on the Cytoplasmic side of the membrane. The helical transmembrane segment at valine 128–leucine 148 threads the bilayer. Over leucine 149–alanine 152 the chain is Extracellular.

It belongs to the Casparian strip membrane proteins (CASP) family. Homodimer and heterodimers. In terms of tissue distribution, expressed in the stele of the root and in leaves.

Its subcellular location is the cell membrane. This is CASP-like protein 5B3 from Arabidopsis thaliana (Mouse-ear cress).